Reading from the N-terminus, the 408-residue chain is Succinylornithine transaminase (408 aa).

Lysine 252 bears the N6-(pyridoxal phosphate)lysine mark.

Belongs to the class-III pyridoxal-phosphate-dependent aminotransferase family. AstC subfamily. Requires pyridoxal 5'-phosphate as cofactor.

It carries out the reaction N(2)-succinyl-L-ornithine + 2-oxoglutarate = N-succinyl-L-glutamate 5-semialdehyde + L-glutamate. It participates in amino-acid degradation; L-arginine degradation via AST pathway; L-glutamate and succinate from L-arginine: step 3/5. Its function is as follows. Catalyzes the transamination of N(2)-succinylornithine and alpha-ketoglutarate into N(2)-succinylglutamate semialdehyde and glutamate. Can also act as an acetylornithine aminotransferase. The chain is Succinylornithine transaminase from Salmonella paratyphi A (strain ATCC 9150 / SARB42).